Consider the following 325-residue polypeptide: MKYCVLLIMIHLLLVELPQFPEALQGNVYAAAPVVAATDLRLRIRSSYIGRSCKEIRDRYNQHEDGLYYLSTASGTVYQTFCDMTTAGGGWTLVASVHENNVYGKCTMGDRWSSQQGSNPNWPDGDGNWANRATFGTAEGATSDDFKNPGYYDIVAEDISVWHVPNNSPMEHWNLGAILRYHTERSFLSIQGGNLHQLFKLYPVRYNAEASGNTGPVIPIVYDFGDKETTRELYGPNTRNQFEPGFITFRPINNELAAMAICSGVKPTTGGDTEHYCIGGGGHFPEGAPRQCGDFPAFDWNGYGTNTEWSASKQLTEAAVLLFYR.

The signal sequence occupies residues 1-23 (MKYCVLLIMIHLLLVELPQFPEA). In terms of domain architecture, Fibrinogen C-terminal spans 44-266 (IRSSYIGRSC…AAMAICSGVK (223 aa)). Residues C53 and C82 are joined by a disulfide bond. Ca(2+)-binding residues include H98, E99, N101, G104, G109, D110, D145, E274, E286, and D294. Intrachain disulfides connect C106–C292 and C262–C277. A carbohydrate is bound by residues 274-275 (EH) and E286.

Expressed at high levels in caudal kidney, liver, and swim bladder. Also expressed in gill, spleen, intestine and head kidney. Not detected in heart.

Functionally, may be involved in innate immune surveillance. May specifically recognize carbohydrate chains of pathogens and bacterial components in a calcium-dependent manner. In vitro binds N-acetylglucosamine residues. This is Intelectin from Oncorhynchus mykiss (Rainbow trout).